Here is a 353-residue protein sequence, read N- to C-terminus: Protein Wnt-11b-2 (353 aa).

The signal sequence occupies residues 1-22; the sequence is MALIRHCVTLLLILCCSRLCGA. N-linked (GlcNAc...) asparagine glycosylation is found at Asn-31, Asn-38, and Asn-88. Cystine bridges form between Cys-78-Cys-89, Cys-128-Cys-136, Cys-138-Cys-155, Cys-208-Cys-222, and Cys-210-Cys-217. Residue Ser-214 is the site of O-palmitoleoyl serine; by PORCN attachment. Sulfotyrosine occurs at positions 274 and 281. Intrachain disulfides connect Cys-282/Cys-313, Cys-298/Cys-308, Cys-312/Cys-352, Cys-328/Cys-343, Cys-330/Cys-340, and Cys-335/Cys-336. N-linked (GlcNAc...) asparagine glycosylation is present at Asn-299.

This sequence belongs to the Wnt family. As to quaternary structure, homodimer. Secreted homodimers form a complex with wnt5a homodimers; tyrosine sulfation of both wnt11 and wnt5a by tpst1 is required for this interaction. Interacts with the transmembrane receptor fzd7/fz7. Interacts with lrp6 and ryk. Interacts with tdgf1/frl1. Interacts weakly with frzb1 and strongly with frzb2/crescent. Interaction with frzb2/crescent antagonizes wnt11 function in the neuroectoderm, but enhances it in mesodermal tissue. Post-translationally, glycosylation is required for protein secretion. In terms of processing, palmitoleoylation is required for efficient binding to frizzled receptors. Depalmitoleoylation leads to Wnt signaling pathway inhibition.

The protein resides in the secreted. Its subcellular location is the extracellular space. It is found in the extracellular matrix. Its function is as follows. Ligand for the frizzled7 transmembrane receptor. Primarily acts via non-canonical Wnt pathways mediated by either Ca(2+) and PKC, or by JNK and dvl2/dsh. Depending on the cellular context, can also signal via the canonical Wnt pathway mediated by beta-catenin and dvl2/dsh. May also inhibit canonical Wnt signaling. Maternally initiates dorsal/ventral axis formation by a canonical route, which signals via lrp6. In a complex with wnt5a, activates the canonical and non-canonical processes involved in axis formation. In the non-canonical pathway, acts through fzd7/fz7 to induce phosphorylation of dvl2/dsh. Signals through a non-canonical Wnt pathway to regulate convergent extension movements during gastrulation. Interactions with the secreted Wnt antagonist sfrp5 to coordinate foregut development, acting via a non-canonical wnt pathway whereby sfrp5 restricts wnt11b activity to prevent inappropriate foregut formation. Mediates cardiogenesis via non-canonical Wnt signaling involving JNK-activation and PKC. Acts redundantly with wnt11/wnt11r during pronephros induction. The polypeptide is Protein Wnt-11b-2 (Xenopus tropicalis (Western clawed frog)).